Consider the following 529-residue polypeptide: Peptide chain release factor 3 (529 aa).

The region spanning 11–280 is the tr-type G domain; it reads AKRRTFAIIS…GLVEWAPAPM (270 aa). Residues 20-27, 88-92, and 142-145 each bind GTP; these read SHPDAGKT, DTPGH, and NKLD.

This sequence belongs to the TRAFAC class translation factor GTPase superfamily. Classic translation factor GTPase family. PrfC subfamily.

The protein localises to the cytoplasm. Functionally, increases the formation of ribosomal termination complexes and stimulates activities of RF-1 and RF-2. It binds guanine nucleotides and has strong preference for UGA stop codons. It may interact directly with the ribosome. The stimulation of RF-1 and RF-2 is significantly reduced by GTP and GDP, but not by GMP. In Escherichia coli O8 (strain IAI1), this protein is Peptide chain release factor 3.